Consider the following 386-residue polypeptide: Beta-citrylglutamate synthase B (386 aa).

The ATP-grasp domain maps to 119-304; sequence FQELAGHGVP…VAGIIADYAA (186 aa). Residues Lys158, 193–203, and Arg219 contribute to the ATP site; that span reads QKYVKESHGRD. Mg(2+)-binding residues include Asp264, Glu277, and Asn279. Asp264, Glu277, and Asn279 together coordinate Mn(2+). The tract at residues 325–359 is disordered; sequence ASETSEPELGPPASTAVDNMSASSSSVDSDPESTE. The span at 338–352 shows a compositional bias: low complexity; that stretch reads STAVDNMSASSSSVD.

It belongs to the RimK family. Requires Mg(2+) as cofactor. The cofactor is Mn(2+).

It localises to the cytoplasm. The catalysed reaction is citrate + L-glutamate + ATP = beta-citrylglutamate + ADP + phosphate + H(+). The enzyme catalyses N-acetyl-L-aspartate + L-glutamate + ATP = N-acetyl-L-aspartyl-L-glutamate + ADP + phosphate + H(+). Its function is as follows. Catalyzes the synthesis of beta-citryl-L-glutamate and N-acetyl-L-aspartyl-L-glutamate. Beta-citryl-L-glutamate is synthesized more efficiently than N-acetyl-L-aspartyl-L-glutamate. In Homo sapiens (Human), this protein is Beta-citrylglutamate synthase B (RIMKLB).